A 244-amino-acid polypeptide reads, in one-letter code: Transcriptional activator protein FnrA (244 aa).

Residues 159-232 form the HTH crp-type domain; sequence KTADERIATF…GKEVRILDSI (74 aa). A DNA-binding region (H-T-H motif) is located at residues 192–211; the sequence is RNEIGNYLGLAVETVSRVFT.

Its function is as follows. Transcriptional regulator of arginine deiminase. The protein is Transcriptional activator protein FnrA (fnrA) of Stutzerimonas stutzeri (Pseudomonas stutzeri).